The primary structure comprises 696 residues: SEC14 domain and spectrin repeat-containing protein 1 (696 aa).

Residues 1–153 form the CRAL-TRIO domain; it reads MEASVILPIL…DFGGSLTYDH (153 aa). Spectrin repeat units follow at residues 275–378, 381–494, and 500–602; these read EEIQ…NLLQ, LEFH…LKML, and FKCE…HRLE.

This sequence belongs to the SOLO family. As to quaternary structure, interacts (via the spectrin 1 repeat) with TRPC4 and TRPC5 (via CIRB domain). Interacts with CTNNB1.

Its function is as follows. May act as the primary docking protein directing membrane turnover and assembly of the transient receptor potential channels TRPC4 and TRPC5. Binds phospholipids such as phosphatidylinositol monophosphates, phosphatidylinositol diphosphates (PIP2s) and phosphatidic acid, but not less polar lipids including phosphatidylcholine, phosphatidylserine, and phosphatidylinositol. The binding to PIP2s is calcium dependent. Might be involved in the plasma membrane localization of CTNNB1. The sequence is that of SEC14 domain and spectrin repeat-containing protein 1 (Sestd1) from Mus musculus (Mouse).